The chain runs to 337 residues: Ribonucleoside-diphosphate reductase small subunit (337 aa).

The tract at residues 1–22 (MDPAVSPASTDPLDTHASGAGA) is disordered. 3 residues coordinate Fe cation: Asp91, Glu121, and His124. The active site involves Tyr128. A helical transmembrane segment spans residues 177 to 197 (FILMILIEGVFFAASFAAIAY). Residues Glu184, Glu218, and His221 each contribute to the Fe cation site.

It belongs to the ribonucleoside diphosphate reductase small chain family. Heterotetramer composed of a homodimer of the large subunit (R1) and a homodimer of the small subunit (R2). Larger multisubunit protein complex are also active, composed of (R1)n(R2)n. Fe cation is required as a cofactor.

It localises to the host membrane. The catalysed reaction is a 2'-deoxyribonucleoside 5'-diphosphate + [thioredoxin]-disulfide + H2O = a ribonucleoside 5'-diphosphate + [thioredoxin]-dithiol. Ribonucleoside-diphosphate reductase holoenzyme provides the precursors necessary for viral DNA synthesis. Allows virus growth in non-dividing cells, as well as reactivation from latency in infected hosts. Catalyzes the biosynthesis of deoxyribonucleotides from the corresponding ribonucleotides. The sequence is that of Ribonucleoside-diphosphate reductase small subunit from Human herpesvirus 2 (strain 333) (HHV-2).